The following is a 210-amino-acid chain: SAP domain-containing ribonucleoprotein (210 aa).

Alanine 2 is modified (N-acetylalanine). The SAP domain occupies 8–42; it reads LHKLKLAELKQECLARGLETKGIKQDLINRLQAYL. Position 10 is an N6-acetyllysine (lysine 10). Residues 45 to 64 are compositionally biased toward acidic residues; the sequence is HAEEEANEEDVLGDETEEEE. A disordered region spans residues 45 to 87; the sequence is HAEEEANEEDVLGDETEEEEPKPIELPVKEEEPPEKVVDMASE. Over residues 65-87 the composition is skewed to basic and acidic residues; sequence PKPIELPVKEEEPPEKVVDMASE. At lysine 142 the chain carries N6-acetyllysine. Positions 161 to 210 are disordered; that stretch reads VSSISRKSEDDEKLKKRKERFGIVTSSAGTGTTEDTEAKKRKRAERFGIA. Serine 163 carries the phosphoserine modification. The span at 184–193 shows a compositional bias: polar residues; that stretch reads VTSSAGTGTT.

This sequence belongs to the SAP domain-containing ribonucleoprotein family. Interacts with DDX39A. Interacts with FUS. Interacts (via the C-terminal domain) with DDX39B; the interaction is direct and facilitates RNA binding of DDX39B. Component of the transcription/export (TREX) complex at least composed of ALYREF/THOC4, DDX39B, SARNP/CIP29, CHTOP and the THO subcomplex; TREX seems to have dynamic structure involving ATP-dependent remodeling; in the complex interacts directly with DDX39B in a ATP-dependent manner which bridges it to ALYREF/THOC4.

Its subcellular location is the nucleus. The protein localises to the nucleus speckle. In terms of biological role, binds both single-stranded and double-stranded DNA with higher affinity for the single-stranded form. Specifically binds to scaffold/matrix attachment region DNA. Also binds single-stranded RNA. Enhances RNA unwinding activity of DDX39A. May participate in important transcriptional or translational control of cell growth, metabolism and carcinogenesis. Component of the TREX complex which is thought to couple mRNA transcription, processing and nuclear export, and specifically associates with spliced mRNA and not with unspliced pre-mRNA. The TREX complex is recruited to spliced mRNAs by a transcription-independent mechanism, binds to mRNA upstream of the exon-junction complex (EJC) and is recruited in a splicing- and cap-dependent manner to a region near the 5' end of the mRNA where it functions in mRNA export to the cytoplasm via the TAP/NXF1 pathway. Associates with DDX39B, which facilitates RNA binding of DDX39B and likely plays a role in mRNA export. The chain is SAP domain-containing ribonucleoprotein (Sarnp) from Rattus norvegicus (Rat).